The following is a 165-amino-acid chain: Large ribosomal subunit protein uL5 (165 aa).

It belongs to the universal ribosomal protein uL5 family. In terms of assembly, part of the 50S ribosomal subunit; contacts the 5S rRNA and probably tRNA. Forms a bridge to the 30S subunit in the 70S ribosome.

In terms of biological role, this is one of the proteins that bind and probably mediate the attachment of the 5S RNA into the large ribosomal subunit, where it forms part of the central protuberance. In the 70S ribosome it contacts protein S13 of the 30S subunit (bridge B1b), connecting the 2 subunits; this bridge is implicated in subunit movement. May contact the P site tRNA; the 5S rRNA and some of its associated proteins might help stabilize positioning of ribosome-bound tRNAs. The chain is Large ribosomal subunit protein uL5 from Methanoregula boonei (strain DSM 21154 / JCM 14090 / 6A8).